Reading from the N-terminus, the 451-residue chain is MSGAAAGGRGGGSWGPGRGGAGGLRRGCSPPAPAGSPRVGLQPLRATVPFQLQQPHQRRDGGGRAASVPCSVAPEKSVCRPQPPQVRRTFSLDTILSSYLLGQWPRDADGAFTCCTNDKATQTPLSWQEPEGERASFCMHKRSASWGSTDHRKEITKLKQQLQRTKLSRSGKEKERSCPVQGDHAALGAGRASLPSHPPGPPVLRLSPCLHRSLEGLNQELEEVFVKEQGEEELLRILEVPDGHRAPAPPQNSSCDHSLLLEPGNLTSSPSVPLASPQPPSQASREEHQGATEELASIHGNKASSPGNPAFLEDGSPSPVLAFAASPRPNHSYVFKREPPEGCERVRVFEEATSPGPDLAFLTSCPDKNKVHFNPTGSAFCPVSLIKPLFPSMGFIFRNCPSSPGSPLPTASPRAPRKGPEASKASSLPSEPWQRSPPSEESVLFQSSLVV.

The segment covering 1–25 (MSGAAAGGRGGGSWGPGRGGAGGLR) has biased composition (gly residues). 2 disordered regions span residues 1–83 (MSGA…RPQP) and 164–183 (RTKL…VQGD). S29 and S67 each carry phosphoserine. Residues 149–175 (TDHRKEITKLKQQLQRTKLSRSGKEKE) are a coiled coil. Residues S193 and S213 each carry the phosphoserine modification. The tract at residues 242–293 (DGHRAPAPPQNSSCDHSLLLEPGNLTSSPSVPLASPQPPSQASREEHQGATE) is disordered. S318 and S326 each carry phosphoserine. T353 bears the Phosphothreonine mark. The disordered stretch occupies residues 403-451 (SPGSPLPTASPRAPRKGPEASKASSLPSEPWQRSPPSEESVLFQSSLVV). Phosphoserine is present on residues S412 and S426. The span at 436–451 (SPPSEESVLFQSSLVV) shows a compositional bias: polar residues.

This sequence belongs to the FAM117 family.

This chain is Protein FAM117A (Fam117a), found in Mus musculus (Mouse).